Here is a 222-residue protein sequence, read N- to C-terminus: Ribonuclease T (222 aa).

In terms of domain architecture, Exonuclease spans 20 to 194 (VVIDVETAGF…YDTERTAELF (175 aa)). Mg(2+) contacts are provided by Asp23, Glu25, His181, and Asp186. His181 acts as the Proton donor/acceptor in catalysis.

This sequence belongs to the RNase T family. Homodimer. The cofactor is Mg(2+).

Trims short 3' overhangs of a variety of RNA species, leaving a one or two nucleotide 3' overhang. Responsible for the end-turnover of tRNA: specifically removes the terminal AMP residue from uncharged tRNA (tRNA-C-C-A). Also appears to be involved in tRNA biosynthesis. This chain is Ribonuclease T, found in Shewanella sp. (strain ANA-3).